The sequence spans 359 residues: DNA polymerase IV (359 aa).

The 182-residue stretch at 4-185 folds into the UmuC domain; that stretch reads IIHIDMDCYF…LSLRKIPGVG (182 aa). The Mg(2+) site is built by Asp8 and Asp103. Residue Glu104 is part of the active site.

It belongs to the DNA polymerase type-Y family. As to quaternary structure, monomer. Requires Mg(2+) as cofactor.

The protein resides in the cytoplasm. The catalysed reaction is DNA(n) + a 2'-deoxyribonucleoside 5'-triphosphate = DNA(n+1) + diphosphate. Functionally, poorly processive, error-prone DNA polymerase involved in untargeted mutagenesis. Copies undamaged DNA at stalled replication forks, which arise in vivo from mismatched or misaligned primer ends. These misaligned primers can be extended by PolIV. Exhibits no 3'-5' exonuclease (proofreading) activity. May be involved in translesional synthesis, in conjunction with the beta clamp from PolIII. In Shewanella sp. (strain ANA-3), this protein is DNA polymerase IV.